Consider the following 201-residue polypeptide: dTTP/UTP pyrophosphatase (201 aa).

Asp-79 (proton acceptor) is an active-site residue.

It belongs to the Maf family. YhdE subfamily. It depends on a divalent metal cation as a cofactor.

Its subcellular location is the cytoplasm. The catalysed reaction is dTTP + H2O = dTMP + diphosphate + H(+). The enzyme catalyses UTP + H2O = UMP + diphosphate + H(+). Functionally, nucleoside triphosphate pyrophosphatase that hydrolyzes dTTP and UTP. May have a dual role in cell division arrest and in preventing the incorporation of modified nucleotides into cellular nucleic acids. This chain is dTTP/UTP pyrophosphatase, found in Hahella chejuensis (strain KCTC 2396).